Consider the following 105-residue polypeptide: uncharacterized protein (105 aa).

3 consecutive transmembrane segments (helical) span residues 14 to 34 (ILLM…IVAW), 41 to 61 (ETVC…FAFL), and 80 to 100 (VGFT…IFTI).

Its subcellular location is the cell membrane. This is an uncharacterized protein from Treponema pallidum (strain Nichols).